A 469-amino-acid chain; its full sequence is Hydrogen cyanide synthase subunit HcnB (469 aa).

Heterotrimer of HcnA, HcnB and HcnC.

It is found in the cell membrane. It carries out the reaction glycine + 2 A = hydrogen cyanide + 2 AH2 + CO2. Functionally, a three-component membrane-bound flavoenzyme that catalyzes the formation of hydrogen cyanide, a secondary metabolite, by transfer of electrons to a cyanide-resistant branch of the aerobic respiratory chain. Contributes to suppression of black root rot of tobacco. The protein is Hydrogen cyanide synthase subunit HcnB of Pseudomonas protegens (strain DSM 19095 / LMG 27888 / CFBP 6595 / CHA0).